Here is a 666-residue protein sequence, read N- to C-terminus: MSDTVSLTFPDGSVRSFAAGATGRDVAESISKSLAKKAVAIALDGVVRDLADPVVDGKIEIVTRADPRALELIRHDTAHVLAEAVQEMWPGTQVTIGPVIENGFYYDFAKNEPFTPEDLPKIEKKMKEIIQRNQPFRKEVWSREKAREVFAAKGESYKVELIDAIPEDQDIKIYYQGDWFDPCRGPHMASTGQIGTAFKLMKVAGAYWRGDSNNPMLTRIYGTAFAEQEQLDNYLHILAEAEKRDHRKLGREMDLFHFQEEGPGVVFWHGKGWKMFQSLTAYMRRRLANTYQEVNAPQVLDKSLWETSGHWGWYQENMFAVKSAHAFTNPNDPEADQRVFALKPMNCPGHVQIFKHGLKSYRELPVRLAEFGLVHRYEASGALHGLMRVRGFTQDDAHVFCTEEQMAAECLRINDLILSVYEDFGFKEVVVKLSTRPEKRVGSDELWDRAESVMTEVLKAIEEQSGGRIKTGILPGEGAFYGPKFEYTLKDAIGREWQCGTTQVDFNLPERFGAFYIDQHSEKTQPVMIHRAICGSMERFLGILIENFAGHMPLWFAPLQVVVATITSEADDYGRDVAEQLRDAGLEVETDFRNEKINYKVREHSVGKVPVIMVCGKREAEERTVNIRRLGSQDQVSMTLDEAIASLVDEATPPDVKRKRAARKPA.

Positions 1-64 (MSDTVSLTFP…VDGKIEIVTR (64 aa)) constitute a TGS domain. Positions 245–553 (DHRKLGREMD…LIENFAGHMP (309 aa)) are catalytic. 3 residues coordinate Zn(2+): C347, H398, and H530.

The protein belongs to the class-II aminoacyl-tRNA synthetase family. In terms of assembly, homodimer. Zn(2+) serves as cofactor.

The protein localises to the cytoplasm. It carries out the reaction tRNA(Thr) + L-threonine + ATP = L-threonyl-tRNA(Thr) + AMP + diphosphate + H(+). Its function is as follows. Catalyzes the attachment of threonine to tRNA(Thr) in a two-step reaction: L-threonine is first activated by ATP to form Thr-AMP and then transferred to the acceptor end of tRNA(Thr). Also edits incorrectly charged L-seryl-tRNA(Thr). The sequence is that of Threonine--tRNA ligase from Allorhizobium ampelinum (strain ATCC BAA-846 / DSM 112012 / S4) (Agrobacterium vitis (strain S4)).